The sequence spans 105 residues: Pyrimidine/purine nucleoside phosphorylase (105 aa).

Belongs to the nucleoside phosphorylase PpnP family.

It catalyses the reaction a purine D-ribonucleoside + phosphate = a purine nucleobase + alpha-D-ribose 1-phosphate. The catalysed reaction is adenosine + phosphate = alpha-D-ribose 1-phosphate + adenine. It carries out the reaction cytidine + phosphate = cytosine + alpha-D-ribose 1-phosphate. The enzyme catalyses guanosine + phosphate = alpha-D-ribose 1-phosphate + guanine. It catalyses the reaction inosine + phosphate = alpha-D-ribose 1-phosphate + hypoxanthine. The catalysed reaction is thymidine + phosphate = 2-deoxy-alpha-D-ribose 1-phosphate + thymine. It carries out the reaction uridine + phosphate = alpha-D-ribose 1-phosphate + uracil. The enzyme catalyses xanthosine + phosphate = alpha-D-ribose 1-phosphate + xanthine. In terms of biological role, catalyzes the phosphorolysis of diverse nucleosides, yielding D-ribose 1-phosphate and the respective free bases. Can use uridine, adenosine, guanosine, cytidine, thymidine, inosine and xanthosine as substrates. Also catalyzes the reverse reactions. In Acidovorax ebreus (strain TPSY) (Diaphorobacter sp. (strain TPSY)), this protein is Pyrimidine/purine nucleoside phosphorylase.